The primary structure comprises 504 residues: D-alanine--D-alanyl carrier protein ligase (504 aa).

T152–S153 is an ATP binding site. D197 serves as a coordination point for D-alanine. N292 to T297 contacts ATP. Residue V301 participates in D-alanine binding. ATP-binding positions include D383, Y394–R397, and K492. K492 is a D-alanine binding site.

It belongs to the ATP-dependent AMP-binding enzyme family. DltA subfamily.

It localises to the cytoplasm. The catalysed reaction is holo-[D-alanyl-carrier protein] + D-alanine + ATP = D-alanyl-[D-alanyl-carrier protein] + AMP + diphosphate. Its pathway is cell wall biogenesis; lipoteichoic acid biosynthesis. In terms of biological role, catalyzes the first step in the D-alanylation of lipoteichoic acid (LTA), the activation of D-alanine and its transfer onto the D-alanyl carrier protein (Dcp) DltC. In an ATP-dependent two-step reaction, forms a high energy D-alanyl-AMP intermediate, followed by transfer of the D-alanyl residue as a thiol ester to the phosphopantheinyl prosthetic group of the Dcp. D-alanylation of LTA plays an important role in modulating the properties of the cell wall in Gram-positive bacteria, influencing the net charge of the cell wall. This is D-alanine--D-alanyl carrier protein ligase from Bacillus cereus (strain ATCC 10987 / NRS 248).